Reading from the N-terminus, the 376-residue chain is Fibromodulin (376 aa).

Positions 1 to 18 (MQWTSLLLLAGLFSLSQA) are cleaved as a signal peptide. Glutamine 19 is subject to Pyrrolidone carboxylic acid. Sulfotyrosine occurs at positions 20, 38, 39, 45, 47, 53, and 55. One can recognise an LRRNT domain in the interval 67-105 (SPSPPDPRDCPQECDCPPNFPTAMYCDNRNLKYLPFVPS). 8 LRR repeats span residues 106-127 (RMKY…VFDN), 130-151 (GLLW…RKVF), 156-176 (HLER…PLPR), 177-198 (SLRE…ALEG), 201-222 (NLTA…MRGL), 224-245 (SLIL…LPSA), 246-266 (LEQL…YFRG), and 269-289 (KLLY…ASNT). N-linked (GlcNAc...) (keratan sulfate) asparagine glycosylation occurs at asparagine 127. An N-linked (GlcNAc...) (keratan sulfate) asparagine glycan is attached at asparagine 166. Asparagine 201 carries N-linked (GlcNAc...) (keratan sulfate) asparagine glycosylation. The N-linked (GlcNAc...) (keratan sulfate) asparagine glycan is linked to asparagine 291. 2 LRR repeats span residues 294–315 (SLLE…NTNL) and 316–335 (ENLY…SFCT). Residues cysteine 334 and cysteine 367 are joined by a disulfide bond. N-linked (GlcNAc...) asparagine glycosylation is present at asparagine 341. The LRR 11 repeat unit spans residues 344–365 (KLQVLRLDGNEIKRSAMPADAP).

The protein belongs to the small leucine-rich proteoglycan (SLRP) family. SLRP class II subfamily. Binds to type I and type II collagen. Post-translationally, binds keratan sulfate chains.

The protein localises to the secreted. It localises to the extracellular space. Its subcellular location is the extracellular matrix. Affects the rate of fibrils formation. May have a primary role in collagen fibrillogenesis. The polypeptide is Fibromodulin (FMOD) (Homo sapiens (Human)).